The primary structure comprises 1091 residues: MSWFNASQLSSFAKQALSQAQKSIDRVLDIQEEEPSAWAEAIPYGEPGISPPVSGGWDTSTWGLNSTSSEPQSPPTASQAITKPVRRTVVDESENFFSAFLSPSDAHTIQKSPVVSKPPSKSQRPEEEVKSSLQESSSPGQSRVSETAEVRDSVCVSGETSAVGTPSPVPEDKHEETAGEESEVKVPTVRLKASENVVNVNTTEDVSTTSTQSLTAETKDMALEPKEQKHEDRQSNTPSPPVSSFSSGTSTTSDIEVLDHESVISESSASSRQETSDAKSSLHLMQTSFQLLSASACPEYSRLDDFQKLNESCCSSDAFERIDSFSVQSLDSRSVSEINSDDELPGKGYALVPIIVSPSTPKTKVVESTEENAEEEEGNETLVAPSEEAELEESGRSATPVNCDQPDILASPTAGSGGHSASGPATEQCEAVENQPKAPPEKEDVCKTVEFLNEKLEKRETQLLSLSKEKALLEEAYDNLKDEMFRVKEESSSISSLKDEFTQRIAEAEKKVQLACKERDAAKKEMKTIKEELATRLNSSQTADLLKEKDEQIQGLMEEGEKLSKQQLHNSNIIKKLRAKDKDNENVIAKLNRKAKELEEELQHLRQVLDGKEEVEKQHRENIKKLNSVVERQEKDLGRLQVDMDELEEKSRSTQAALDSAYRELTDLHKANAAKDSEVQEAALRREMKAKEELSGALEKAQEEARQQQEALVLQVGDLRLALQRAEQAAARKEDYLRHEISELQQRLQEAENRNQELSQSVSSTARPLLRQIENLQATLGSQTSSWETLEKSLSDRLGESQTLLAAAVERERAATEELLANKIQMSSVESQNTLLRQENSRLQAQLESEKNKLRKLEDENSRYQVELENLKDEYVRTLEESRKEKTLLSSQLEMERMKVEQERKKTIFTQEALKEKDHKLFSVCSTPTMSRSSSISGVDAAGLQASFLSQDESHDHSFGPMSTSASGSNLYEAVRMGAGSSIIENLQSQLKLREGEISHLQLEISNLEKTRSIMSEELVKLTNQNDELEEKVKEIPKLRVQLRDLDQRYNTILQMYGEKAEEAEELRLDLEDVKNMYKTQIDELLRQRLS.

Disordered stretches follow at residues 42–86 (IPYG…KPVR) and 100–280 (FLSP…DAKS). The segment covering 57–81 (WDTSTWGLNSTSSEPQSPPTASQAI) has biased composition (polar residues). Residues Ser73, Ser78, Ser112, and Ser136 each carry the phosphoserine modification. 3 stretches are compositionally biased toward low complexity: residues 111–122 (KSPVVSKPPSKS), 131–142 (SSLQESSSPGQS), and 194–211 (SENV…TTST). Ser213 is subject to Phosphoserine. Residues 217–234 (ETKDMALEPKEQKHEDRQ) show a composition bias toward basic and acidic residues. Low complexity-rich tracts occupy residues 242–253 (VSSFSSGTSTTS) and 264–273 (ISESSASSRQ). Phosphoserine occurs at positions 324, 326, 329, 334, 340, and 357. The interaction with Elongin BC complex stretch occupies residues 329 to 338 (SLDSRSVSEI). Residues 360–443 (TPKTKVVEST…NQPKAPPEKE (84 aa)) are disordered. The segment covering 368–379 (STEENAEEEEGN) has biased composition (acidic residues). Residues Ser411 and Ser540 each carry the phosphoserine modification. 2 coiled-coil regions span residues 443–767 (EDVC…STAR) and 824–894 (IQMS…SQLE). 2 positions are modified to phosphoserine: Ser923 and Ser926. Thr927 carries the post-translational modification Phosphothreonine. Ser931 bears the Phosphoserine mark. A coiled-coil region spans residues 984–1090 (IENLQSQLKL…QIDELLRQRL (107 aa)).

Component of the SNF/SWI transcription factor complexes. Interacts with RAB6A. Interacts with TCEB1. Interacts with STAT3 and FER. Interacts with TRNP1; may regulate TRNP1 proteasomal degradation. Post-translationally, phosphorylated by FER.

Its subcellular location is the cytoplasm. The protein resides in the nucleus. It localises to the golgi apparatus membrane. Its function is as follows. Potential coactivator of the androgen receptor. May play critical roles in two RAB6-dependent retrograde transport processes: one from endosomes to the Golgi and the other from the Golgi to the ER. Mediates STAT3 degradation. The sequence is that of TATA element modulatory factor (Tmf1) from Mus musculus (Mouse).